The chain runs to 314 residues: Protein YIF1B (314 aa).

Methionine 1 bears the N-acetylmethionine mark. Low complexity predominate over residues 1–12 (MHPAGLAAAAAG). The disordered stretch occupies residues 1 to 55 (MHPAGLAAAAAGTPRLRKWPSKRRIPVSQPGMADPHQLFDDTSSAQSRGYGAQRA). Residues 1–156 (MHPAGLAAAA…APRFDVNAPD (156 aa)) are Cytoplasmic-facing. The residue at position 13 (threonine 13) is a Phosphothreonine. A compositionally biased stretch (basic residues) spans 15–25 (RLRKWPSKRRI). Phosphoserine is present on serine 65. Residues 157–177 (LYIPAMAFITYVLVAGLALGT) form a helical membrane-spanning segment. Residues 178–192 (QDRFSPDLLGLQASS) lie on the Extracellular side of the membrane. Residues 193–213 (ALAWLTLEVLAILLSLYLVTV) traverse the membrane as a helical segment. The Cytoplasmic portion of the chain corresponds to 214-219 (NTDLTT). A helical transmembrane segment spans residues 220–240 (IDLVAFLGYKYVGMIGGVLMG). A topological domain (extracellular) is located at residue leucine 241. The helical transmembrane segment at 242–262 (LFGKIGYYLVLGWCCVAIFVF) threads the bilayer. Residues 263–292 (MIRTLRLKILADAAAEGVPVRGARNQLRMY) lie on the Cytoplasmic side of the membrane. Residues 293 to 313 (LTMAVAAAQPMLMYWLTFHLV) form a helical membrane-spanning segment. Position 314 (arginine 314) is a topological domain, extracellular.

This sequence belongs to the YIF1 family. Interacts with HTR1A (via C-terminus). Interacts with ABCB9 (via TMD0); this interaction allows (but is not essential) the ER-to-Golgi trafficking and strongly depends on a salt bridge within TMD0.

It localises to the endoplasmic reticulum membrane. The protein localises to the golgi apparatus membrane. It is found in the endoplasmic reticulum-Golgi intermediate compartment membrane. Functions in endoplasmic reticulum to Golgi vesicle-mediated transport and regulates the proper organization of the endoplasmic reticulum and the Golgi. Plays a key role in targeting to neuronal dendrites receptors such as HTR1A. Plays also a role in primary cilium and sperm flagellum assembly probably through protein transport to these compartments. The protein is Protein YIF1B of Homo sapiens (Human).